The following is a 130-amino-acid chain: Small ribosomal subunit protein uS9 (130 aa).

The disordered stretch occupies residues 105–130 (TRDSRMKERKKPGLRGARRAPQFSKR). The span at 111–130 (KERKKPGLRGARRAPQFSKR) shows a compositional bias: basic residues.

This sequence belongs to the universal ribosomal protein uS9 family.

The sequence is that of Small ribosomal subunit protein uS9 from Lysinibacillus sphaericus (strain C3-41).